The following is an 899-amino-acid chain: 1,4-alpha-glucan-branching enzyme 3, chloroplastic/amyloplastic (899 aa).

Residues 1–49 constitute a chloroplast transit peptide; it reads MVSLSNQTRFSFHPNNLVVSEKRRLGISGVNFPRKIKLKITCFAAERPR. The segment at 47-67 is disordered; the sequence is RPRQEKQKKKSQSQSTSDAEA. Glutamate 612 functions as the Proton donor in the catalytic mechanism.

The protein belongs to the glycosyl hydrolase 13 family. GlgB subfamily. In terms of assembly, monomer. As to expression, mostly expressed in flowers and inflorescence, and, to a lower extent, in seedlings, roots, stems, leaves, siliques and seeds.

Its subcellular location is the plastid. It localises to the chloroplast stroma. The protein localises to the amyloplast. The catalysed reaction is Transfers a segment of a (1-&gt;4)-alpha-D-glucan chain to a primary hydroxy group in a similar glucan chain.. It functions in the pathway glycan biosynthesis; starch biosynthesis. In terms of biological role, catalyzes the formation of the alpha-1,6-glucosidic linkages in starch by scission of a 1,4-alpha-linked oligosaccharide from growing alpha-1,4-glucan chains and the subsequent attachment of the oligosaccharide to the alpha-1,6 position. Essential during embryogenesis. The protein is 1,4-alpha-glucan-branching enzyme 3, chloroplastic/amyloplastic (SBE3) of Arabidopsis thaliana (Mouse-ear cress).